Reading from the N-terminus, the 35-residue chain is Photosystem II reaction center protein T (35 aa).

Residues alanine 3–phenylalanine 23 form a helical membrane-spanning segment.

Belongs to the PsbT family. PSII is composed of 1 copy each of membrane proteins PsbA, PsbB, PsbC, PsbD, PsbE, PsbF, PsbH, PsbI, PsbJ, PsbK, PsbL, PsbM, PsbT, PsbY, PsbZ, Psb30/Ycf12, at least 3 peripheral proteins of the oxygen-evolving complex and a large number of cofactors. It forms dimeric complexes.

The protein localises to the plastid. The protein resides in the chloroplast thylakoid membrane. Found at the monomer-monomer interface of the photosystem II (PS II) dimer, plays a role in assembly and dimerization of PSII. PSII is a light-driven water plastoquinone oxidoreductase, using light energy to abstract electrons from H(2)O, generating a proton gradient subsequently used for ATP formation. The protein is Photosystem II reaction center protein T of Aristolochia macrophylla (Dutchman's pipe vine).